The primary structure comprises 465 residues: Methionine aminopeptidase 2-2 (465 aa).

The span at 1–13 shows a compositional bias: basic and acidic residues; that stretch reads MGSKTPNDHRRGP. Residues 1–92 are disordered; that stretch reads MGSKTPNDHR…KKKTLLGGLQ (92 aa). A compositionally biased stretch (acidic residues) spans 44–55; it reads GETEDGEDEDDD. Positions 71 to 86 are enriched in basic residues; the sequence is TKKKNKRKKNKKKKKT. Histidine 217 contacts substrate. Aspartate 238, aspartate 249, and histidine 318 together coordinate a divalent metal cation. Histidine 326 contributes to the substrate binding site. A divalent metal cation contacts are provided by glutamate 351 and glutamate 446.

This sequence belongs to the peptidase M24A family. Methionine aminopeptidase eukaryotic type 2 subfamily. Requires Co(2+) as cofactor. It depends on Zn(2+) as a cofactor. Mn(2+) serves as cofactor. Fe(2+) is required as a cofactor.

It localises to the cytoplasm. The enzyme catalyses Release of N-terminal amino acids, preferentially methionine, from peptides and arylamides.. In terms of biological role, cotranslationally removes the N-terminal methionine from nascent proteins. The N-terminal methionine is often cleaved when the second residue in the primary sequence is small and uncharged (Met-Ala-, Cys, Gly, Pro, Ser, Thr, or Val). This Ajellomyces dermatitidis (strain ER-3 / ATCC MYA-2586) (Blastomyces dermatitidis) protein is Methionine aminopeptidase 2-2.